The following is a 209-amino-acid chain: Small ribosomal subunit protein uS4 (209 aa).

One can recognise an S4 RNA-binding domain in the interval 98-161 (TRLDNVVYRM…AKQLRVQEAL (64 aa)).

It belongs to the universal ribosomal protein uS4 family. In terms of assembly, part of the 30S ribosomal subunit. Contacts protein S5. The interaction surface between S4 and S5 is involved in control of translational fidelity.

In terms of biological role, one of the primary rRNA binding proteins, it binds directly to 16S rRNA where it nucleates assembly of the body of the 30S subunit. With S5 and S12 plays an important role in translational accuracy. The sequence is that of Small ribosomal subunit protein uS4 from Stenotrophomonas maltophilia (strain R551-3).